A 116-amino-acid chain; its full sequence is Putative oxygen-evolving enhancer protein 1 (116 aa).

It belongs to the PsbO family.

Its subcellular location is the plastid. The protein resides in the chloroplast thylakoid membrane. Functionally, stabilizes the manganese cluster which is the primary site of water splitting. The polypeptide is Putative oxygen-evolving enhancer protein 1 (Pinus strobus (Eastern white pine)).